A 254-amino-acid chain; its full sequence is MIKVVICGAFGRMGTIIGEIISKEQDMQLVGGVDIKEGTFFGVPVVTSDKLADFLSSVQPDVVIDFTVAPAAAQNVPVAARAGCAIILGTTGLTQEQRKGIDAAIREGKVPAVISTNYSIGMNILWTLIRDAARKLSDYDVEVIEAHHRYKKDAPSGTARTILQILQEEIGPREEIYGREGMTERSSEIGVHVIRGGDIVGDHAVMFASNFETVTLSHRAYDRSVFAEGAVRATRWVFGKEPGIYGMKDVLNLS.

Position 8 to 13 (8 to 13) interacts with NAD(+); it reads GAFGRM. NADP(+) is bound at residue lysine 36. NAD(+) is bound by residues 89–91 and 115–118; these read GTT and STNY. The active-site Proton donor/acceptor is histidine 147. Histidine 148 contacts (S)-2,3,4,5-tetrahydrodipicolinate. Catalysis depends on lysine 151, which acts as the Proton donor. Position 157-158 (157-158) interacts with (S)-2,3,4,5-tetrahydrodipicolinate; sequence GT.

Belongs to the DapB family.

It is found in the cytoplasm. The enzyme catalyses (S)-2,3,4,5-tetrahydrodipicolinate + NAD(+) + H2O = (2S,4S)-4-hydroxy-2,3,4,5-tetrahydrodipicolinate + NADH + H(+). It carries out the reaction (S)-2,3,4,5-tetrahydrodipicolinate + NADP(+) + H2O = (2S,4S)-4-hydroxy-2,3,4,5-tetrahydrodipicolinate + NADPH + H(+). It functions in the pathway amino-acid biosynthesis; L-lysine biosynthesis via DAP pathway; (S)-tetrahydrodipicolinate from L-aspartate: step 4/4. Functionally, catalyzes the conversion of 4-hydroxy-tetrahydrodipicolinate (HTPA) to tetrahydrodipicolinate. This Methanospirillum hungatei JF-1 (strain ATCC 27890 / DSM 864 / NBRC 100397 / JF-1) protein is 4-hydroxy-tetrahydrodipicolinate reductase.